The primary structure comprises 352 residues: MGNFGRVPVGIVGASGYGGVQLVRLLMDHPEIELVYLGGESSVGKSFASLYPHLAHAVKLSIEEVDPEVIARRCEVVFLSMPNGLACQIVPTLLEKGCKVLDLSADYRFRNLTTYTTWYGVERSDRTTADTAIYGLPELYRDRISEAQLVGCPGSYPTASLLALSPLLKQGLIVPETAIVDAKSGTSGGGREAKTYLLLAEADNSLAPYSVVRHRHTPEIEQICSDLAGHEVTVQFTPHLVPIVRGILATVYATLRDPGLVGDDLTTIYTAFYRNSPWVKVCESGIYPQTKWAAGSNLCYIGVEVDPRTGRVIVMSVIDNLIKGQAGQAIQCLNIMMGWDETLGLPKMGFYP.

It belongs to the NAGSA dehydrogenase family. Type 1 subfamily.

The protein resides in the cytoplasm. It carries out the reaction N-acetyl-L-glutamate 5-semialdehyde + phosphate + NADP(+) = N-acetyl-L-glutamyl 5-phosphate + NADPH + H(+). It participates in amino-acid biosynthesis; L-arginine biosynthesis; N(2)-acetyl-L-ornithine from L-glutamate: step 3/4. Its function is as follows. Catalyzes the NADPH-dependent reduction of N-acetyl-5-glutamyl phosphate to yield N-acetyl-L-glutamate 5-semialdehyde. The protein is N-acetyl-gamma-glutamyl-phosphate reductase 1 of Nostoc sp. (strain PCC 7120 / SAG 25.82 / UTEX 2576).